A 757-amino-acid polypeptide reads, in one-letter code: Alcohol dehydrogenase (quinone), dehydrogenase subunit (757 aa).

An N-terminal signal peptide occupies residues 1–34 (MTSGLLTPIKVTKKRLLSCAAALAFSAAVPVAFA). Q35 is modified (pyrrolidone carboxylic acid). Position 95 (E95) interacts with pyrroloquinoline quinone. A disulfide bridge connects residues C141 and C142. R147 is a binding site for pyrroloquinoline quinone. Residue E215 coordinates Ca(2+). T277 contacts pyrroloquinoline quinone. The Ca(2+) site is built by N297 and D342. D342 functions as the Proton acceptor in the catalytic mechanism. Residues K369 and I588 each coordinate pyrroloquinoline quinone. A Cytochrome c domain is found at 640 to 719 (ARQKDGYFMY…DIRNFIVKRA (80 aa)). Heme c is bound by residues C653, C656, H657, and M696. The tract at residues 726–757 (EVKARENSTGVPNDQFLNVPQSTADVPTADHP) is disordered. Residues 732–750 (NSTGVPNDQFLNVPQSTAD) are compositionally biased toward polar residues.

It belongs to the bacterial PQQ dehydrogenase family. In terms of assembly, the alcohol dehydrogenase multicomponent enzyme system is composed of a dehydrogenase subunit I (AdhA), a cytochrome c subunit II (AdhB) and a subunit III (AdhS). It depends on pyrroloquinoline quinone as a cofactor. Requires Ca(2+) as cofactor. Heme c serves as cofactor.

It localises to the cell membrane. The catalysed reaction is ethanol + a ubiquinone = a ubiquinol + acetaldehyde. Its activity is regulated as follows. 2,6-dichloro-4-dicyanovinylphenol (PC16) and antimycin A inhibit ubiquinol oxidation activity more selectively than the ubiquinone reductase activity. Dehydrogenase component of the alcohol dehydrogenase multicomponent enzyme system which is involved in the production of acetic acid and in the ethanol oxidase respiratory chain. Quinohemoprotein alcohol dehydrogenase (ADH) catalyzes the oxidation of ethanol to acetaldehyde by transferring electrons to the ubiquinone embedded in the membrane phospholipids. The electrons transfer from ethanol to membranous ubiquinone occurs from pyrroloquinoline quinone (PQQ) to one heme c in subunit I (AdhA), and finally to two heme c in subunit II (AdhB). Besides ubiquinone reduction, ADH also has a ubiquinol (QH2) oxidation reaction which mediates electron transfer from ubiquinol to the non-energy generating bypass oxidase system. The electrons transfer occurs from ubiquinol (QH2) to the additional heme c within subunit II (AdhB). Also able to use quinone analogs such as 2,3-dimethoxy-5-methyl-6-n-decyl-1,4-benzoquinone (DB) and 2,3-dimethoxy-5-methyl-6-n-pentyl-1,4-benzoquinone (PB). The chain is Alcohol dehydrogenase (quinone), dehydrogenase subunit from Gluconobacter oxydans (strain 621H) (Gluconobacter suboxydans).